The primary structure comprises 428 residues: Histidine--tRNA ligase (428 aa).

This sequence belongs to the class-II aminoacyl-tRNA synthetase family. As to quaternary structure, homodimer.

It localises to the cytoplasm. It carries out the reaction tRNA(His) + L-histidine + ATP = L-histidyl-tRNA(His) + AMP + diphosphate + H(+). This is Histidine--tRNA ligase from Mesomycoplasma hyopneumoniae (strain 7448) (Mycoplasma hyopneumoniae).